The chain runs to 345 residues: Biotin synthase (345 aa).

The region spanning 38–256 is the Radical SAM core domain; that stretch reads RQVQVSTLLS…IAVARIMMPA (219 aa). [4Fe-4S] cluster contacts are provided by C53, C57, and C60. [2Fe-2S] cluster-binding residues include C97, C128, C188, and R260.

This sequence belongs to the radical SAM superfamily. Biotin synthase family. In terms of assembly, homodimer. The cofactor is [4Fe-4S] cluster. [2Fe-2S] cluster serves as cofactor.

The enzyme catalyses (4R,5S)-dethiobiotin + (sulfur carrier)-SH + 2 reduced [2Fe-2S]-[ferredoxin] + 2 S-adenosyl-L-methionine = (sulfur carrier)-H + biotin + 2 5'-deoxyadenosine + 2 L-methionine + 2 oxidized [2Fe-2S]-[ferredoxin]. It functions in the pathway cofactor biosynthesis; biotin biosynthesis; biotin from 7,8-diaminononanoate: step 2/2. In terms of biological role, catalyzes the conversion of dethiobiotin (DTB) to biotin by the insertion of a sulfur atom into dethiobiotin via a radical-based mechanism. This is Biotin synthase from Serratia proteamaculans (strain 568).